Reading from the N-terminus, the 126-residue chain is DNA-directed RNA polymerase subunit omega (126 aa).

It belongs to the RNA polymerase subunit omega family. The RNAP catalytic core consists of 2 alpha, 1 beta, 1 beta' and 1 omega subunit. When a sigma factor is associated with the core the holoenzyme is formed, which can initiate transcription.

It carries out the reaction RNA(n) + a ribonucleoside 5'-triphosphate = RNA(n+1) + diphosphate. Its function is as follows. Promotes RNA polymerase assembly. Latches the N- and C-terminal regions of the beta' subunit thereby facilitating its interaction with the beta and alpha subunits. The protein is DNA-directed RNA polymerase subunit omega of Rickettsia bellii (strain OSU 85-389).